We begin with the raw amino-acid sequence, 474 residues long: MSINRNLLNIIIILCICLNLGCNDGAQERETDSHTIQVSSLLPSSSSSCVLSPRASTTKSSLHVTHRHGTCSRLNNGKATSPDHVEILRLDQARVNSIHSKLSKKLATDHVSESKSTDLPAKDGSTLGSGNYIVTVGLGTPKNDLSLIFDTGSDLTWTQCQPCVRTCYDQKEPIFNPSKSTSYYNVSCSSAACGSLSSATGNAGSCSASNCIYGIQYGDQSFSVGFLAKEKFTLTNSDVFDGVYFGCGENNQGLFTGVAGLLGLGRDKLSFPSQTATAYNKIFSYCLPSSASYTGHLTFGSAGISRSVKFTPISTITDGTSFYGLNIVAITVGGQKLPIPSTVFSTPGALIDSGTVITRLPPKAYAALRSSFKAKMSKYPTTSGVSILDTCFDLSGFKTVTIPKVAFSFSGGAVVELGSKGIFYVFKISQVCLAFAGNSDDSNAAIFGNVQQQTLEVVYDGAGGRVGFAPNGCS.

Positions 1 to 25 are cleaved as a signal peptide; that stretch reads MSINRNLLNIIIILCICLNLGCNDG. One can recognise a Peptidase A1 domain in the interval 132–469; sequence YIVTVGLGTP…DGAGGRVGFA (338 aa). Active-site residues include aspartate 150 and aspartate 352. A disulfide bond links cysteine 391 and cysteine 432. A lipid anchor (GPI-anchor amidated asparagine) is attached at asparagine 443. A propeptide spans 444–474 (removed in mature form); sequence AAIFGNVQQQTLEVVYDGAGGRVGFAPNGCS.

Belongs to the peptidase A1 family.

It localises to the cell membrane. Functionally, probably not redundant with AED1 and not involved in restriction of salicylic acid (SA) or systemic acquired resistance (SAR) signaling. This chain is Aspartyl protease family protein At5g10770, found in Arabidopsis thaliana (Mouse-ear cress).